The primary structure comprises 237 residues: Glutathione-independent glyoxalase HSP31 (237 aa).

Active-site residues include C138, H139, and E170. C138 is subject to Cysteine sulfinic acid (-SO2H).

The protein belongs to the peptidase C56 family. HSP31-like subfamily. In terms of assembly, homodimer. In terms of processing, cys-138 is easily oxidized to sulfinic acid.

It localises to the cytoplasm. Its subcellular location is the P-body. It catalyses the reaction methylglyoxal + H2O = (R)-lactate + H(+). In terms of biological role, catalyzes the conversion of methylglyoxal (MG) to D-lactate in a single glutathione (GSH)-independent step. May play a role in detoxifying endogenously produced glyoxals. Involved in protection against reactive oxygen species (ROS). Important for viability in stationary phase. May negatively regulate TORC1 in response to nutrient limitation. This Saccharomyces cerevisiae (strain ATCC 204508 / S288c) (Baker's yeast) protein is Glutathione-independent glyoxalase HSP31.